The primary structure comprises 401 residues: Glutamyl-tRNA reductase (401 aa).

Substrate-binding positions include 45 to 48 (TCNR), Ser-101, 106 to 108 (EDQ), and Gln-112. Cys-46 (nucleophile) is an active-site residue. 177 to 182 (GYGEVG) contacts NADP(+).

Belongs to the glutamyl-tRNA reductase family. As to quaternary structure, homodimer.

The enzyme catalyses (S)-4-amino-5-oxopentanoate + tRNA(Glu) + NADP(+) = L-glutamyl-tRNA(Glu) + NADPH + H(+). It functions in the pathway porphyrin-containing compound metabolism; protoporphyrin-IX biosynthesis; 5-aminolevulinate from L-glutamyl-tRNA(Glu): step 1/2. In terms of biological role, catalyzes the NADPH-dependent reduction of glutamyl-tRNA(Glu) to glutamate 1-semialdehyde (GSA). This Clostridium beijerinckii (strain ATCC 51743 / NCIMB 8052) (Clostridium acetobutylicum) protein is Glutamyl-tRNA reductase.